The sequence spans 439 residues: GTPase Der (439 aa).

2 consecutive EngA-type G domains span residues S2–A166 and T176–N351. Residues G8–S15, D55–F59, N118–D121, G182–S189, D229–I233, and N294–D297 each bind GTP. The KH-like domain maps to R352 to N436.

The protein belongs to the TRAFAC class TrmE-Era-EngA-EngB-Septin-like GTPase superfamily. EngA (Der) GTPase family. In terms of assembly, associates with the 50S ribosomal subunit.

In terms of biological role, GTPase that plays an essential role in the late steps of ribosome biogenesis. The polypeptide is GTPase Der (Syntrophotalea carbinolica (strain DSM 2380 / NBRC 103641 / GraBd1) (Pelobacter carbinolicus)).